The sequence spans 204 residues: uncharacterized protein (204 aa).

A compositionally biased stretch (polar residues) spans 1-10 (MQQAITQQEK). Disordered stretches follow at residues 1 to 20 (MQQA…LPNR) and 70 to 99 (DEAR…KNTE). Residues 131 to 204 (VRDSKKFGLQ…TVTDCVVIGM (74 aa)) form the SPOR domain.

This sequence to E.coli FtsN repeat regions.

This is an uncharacterized protein from Haemophilus influenzae (strain ATCC 51907 / DSM 11121 / KW20 / Rd).